We begin with the raw amino-acid sequence, 332 residues long: Multiple virulence factor regulator MvfR (332 aa).

Positions 4 to 61 (HNLNHVNMFLQVIASGSISSAARILRKSHTAVSSAVSNLEIDLCVELVRRDGYKVEPT) constitute an HTH lysR-type domain. Residues 21 to 40 (ISSAARILRKSHTAVSSAVS) constitute a DNA-binding region (H-T-H motif).

Belongs to the LysR transcriptional regulatory family. In terms of assembly, forms homooligomers.

It localises to the cell inner membrane. It is found in the secreted. Both 3,4-dihydroxy-2-heptylquinoline (PQS) and its precursor 4-hydroxy-2-heptylquinoline (HHQ) function as ligands and promote MvfR DNA-binding activity leading to transcriptional activation. Its function is as follows. Transcription regulator that plays a critical role in virulence by positively regulating the expression of multiple quorum sensing (QS)-regulated virulence factors, genes involved in protein secretion, translation, response to oxidative stress and the phnAB operon. At the stationary phase, negatively autoregulates its function through cleavage and translocation to the extracellular space. The sequence is that of Multiple virulence factor regulator MvfR from Pseudomonas aeruginosa (strain ATCC 15692 / DSM 22644 / CIP 104116 / JCM 14847 / LMG 12228 / 1C / PRS 101 / PAO1).